The chain runs to 461 residues: Phosphatidate cytidylyltransferase 1 (461 aa).

The disordered stretch occupies residues 1-68 (MLELRHRGGC…PEVPPSSDRT (68 aa)). Arg-7 carries the omega-N-methylarginine modification. Basic and acidic residues predominate over residues 22–56 (REGEAAGGDHETESTSDKETDIDDRYGDLDARGDS). Phosphoserine is present on residues Ser-35 and Ser-37. Transmembrane regions (helical) follow at residues 96 to 116 (MISL…LLVL), 149 to 169 (FLLC…FATF), 183 to 203 (HRFI…LSLV), 230 to 250 (LVIQ…SSVI), 279 to 299 (GFIG…YVLS), and 357 to 377 (IALS…ASGF).

It belongs to the CDS family. Homodimer. Interacts with FOS; this interaction may enhance catalytic activity. Mg(2+) is required as a cofactor. Brain, retina and testis. Found in cerebellar Purkinje cells, pineal body, inner segment of photoreceptor cells and postmitotic spermatocytes and spermatids.

The protein resides in the endoplasmic reticulum membrane. It carries out the reaction a 1,2-diacyl-sn-glycero-3-phosphate + CTP + H(+) = a CDP-1,2-diacyl-sn-glycerol + diphosphate. It catalyses the reaction 1-octadecanoyl-2-(5Z,8Z,11Z,14Z-eicosatetraenoyl)-sn-glycero-3-phosphate + CTP + H(+) = 1-octadecanoyl-2-(5Z,8Z,11Z,14Z-eicosatetraenoyl)-sn-glycero-3-cytidine-5'-diphosphate + diphosphate. The catalysed reaction is 1-octadecanoyl-2-(9Z,12Z-octadecadienoyl)-sn-glycero-3-phosphate + CTP + H(+) = 1-octadecanoyl-2-(9Z,12Z-octadecadienoyl)-sn-glycero-3-cytidine-5'-diphosphate + diphosphate. The enzyme catalyses 1-hexadecanoyl-2-(5Z,8Z,11Z,14Z-eicosatetraenoyl)-sn-glycero-3-phosphate + CTP + H(+) = 1-hexadecanoyl-2-(5Z,8Z,11Z,14Z-eicosatetraenoyl)-sn-glycero-3-cytidine-5'-diphosphate + diphosphate. It carries out the reaction 1,2-di-(5Z,8Z,11Z,14Z)-eicosatetraenoyl-sn-glycero-3-phosphate + CTP + H(+) = 1,2-di-(5Z,8Z,11Z,14Z-eicosatetraenoyl)-sn-glycero-3-cytidine-5'-diphosphate + diphosphate. It catalyses the reaction 1-octadecanoyl-2-(9Z-octadecenoyl)-sn-glycero-3-phosphate + CTP + H(+) = 1-octadecanoyl-2-(9Z-octadecenoyl)-sn-glycero-3-cytidine-5'-diphosphate + diphosphate. The catalysed reaction is 1-octadecanoyl-2-(4Z,7Z,10Z,13Z,16Z,19Z-docosahexaenoyl)-sn-glycero-3-phosphate + CTP + H(+) = 1-octadecanoyl-2-(4Z,7Z,10Z,13Z,16Z,19Z-docosahexaenoyl)-sn-glycero-3-cytidine-5'-diphosphate + diphosphate. The enzyme catalyses 1,2-di-(9Z,12Z-octadecadienoyl)-sn-glycero-3-phosphate + CTP + H(+) = 1,2-di-(9Z,12Z-octadecadienoyl)-sn-glycero-3-cytidine-5'-diphosphate + diphosphate. It carries out the reaction 1,2-di-(9Z-octadecenoyl)-sn-glycero-3-phosphate + CTP + H(+) = 1,2-di-(9Z-octadecenoyl)-sn-glycero-3-cytidine-5'-diphosphate + diphosphate. The protein operates within phospholipid metabolism; CDP-diacylglycerol biosynthesis; CDP-diacylglycerol from sn-glycerol 3-phosphate: step 3/3. Activated by GTP. Inhibited by CDP-diacylglycerol and by phosphatidylglycerol 4,5-bisphosphate (PPI2). Its function is as follows. Catalyzes the conversion of phosphatidic acid (PA) to CDP-diacylglycerol (CDP-DAG), an essential intermediate in the synthesis of phosphatidylglycerol, cardiolipin and phosphatidylinositol. Exhibits almost no acyl chain preference for PA, showing no discrimination for the sn-1/sn-2 acyl chain composition of PAs. Plays an important role in regulatinng the growth of lipid droplets which are storage organelles at the center of lipid and energy homeostasis. Positively regulates the differentiation and development of adipocytes. The sequence is that of Phosphatidate cytidylyltransferase 1 from Rattus norvegicus (Rat).